Here is a 161-residue protein sequence, read N- to C-terminus: Nucleotide-binding protein Shew185_3601 (161 aa).

The protein belongs to the YajQ family.

Functionally, nucleotide-binding protein. This Shewanella baltica (strain OS185) protein is Nucleotide-binding protein Shew185_3601.